Reading from the N-terminus, the 477-residue chain is V-type ATP synthase beta chain (477 aa).

It belongs to the ATPase alpha/beta chains family.

In terms of biological role, produces ATP from ADP in the presence of a proton gradient across the membrane. The V-type beta chain is a regulatory subunit. In Anaeromyxobacter sp. (strain K), this protein is V-type ATP synthase beta chain.